Reading from the N-terminus, the 145-residue chain is 3-dehydroquinate dehydratase (145 aa).

Catalysis depends on tyrosine 23, which acts as the Proton acceptor. Positions 75, 81, and 88 each coordinate substrate. Histidine 101 functions as the Proton donor in the catalytic mechanism. Residues 102 to 103 and arginine 112 contribute to the substrate site; that span reads LS.

It belongs to the type-II 3-dehydroquinase family. In terms of assembly, homododecamer.

The catalysed reaction is 3-dehydroquinate = 3-dehydroshikimate + H2O. It participates in metabolic intermediate biosynthesis; chorismate biosynthesis; chorismate from D-erythrose 4-phosphate and phosphoenolpyruvate: step 3/7. Catalyzes a trans-dehydration via an enolate intermediate. The polypeptide is 3-dehydroquinate dehydratase (Legionella pneumophila (strain Lens)).